A 423-amino-acid polypeptide reads, in one-letter code: Zinc finger and BTB domain-containing protein 6 (423 aa).

The BTB domain maps to Cys-33–Arg-97. The residue at position 201 (Ser-201) is a Phosphoserine. C2H2-type zinc fingers lie at residues His-300 to His-322, Phe-325 to His-347, Phe-353 to His-375, and Tyr-381 to His-404.

It is found in the nucleus. May be involved in transcriptional regulation. The protein is Zinc finger and BTB domain-containing protein 6 (Zbtb6) of Mus musculus (Mouse).